A 60-amino-acid polypeptide reads, in one-letter code: Metallothionein A (60 aa).

The beta stretch occupies residues Met-1 to Cys-28. Cys-4, Cys-6, Cys-12, Cys-14, Cys-18, Cys-20, Cys-23, Cys-25, Cys-28, Cys-32, Cys-33, Cys-35, Cys-36, Cys-40, Cys-43, Cys-47, Cys-49, Cys-54, Cys-58, and Cys-59 together coordinate a divalent metal cation. Residues Lys-29–Gln-60 are alpha.

The protein belongs to the metallothionein superfamily. Type 1 family.

Metallothioneins have a high content of cysteine residues that bind various heavy metals. The polypeptide is Metallothionein A (mta) (Parachaenichthys charcoti (Charcot's dragonfish)).